A 145-amino-acid polypeptide reads, in one-letter code: Transcription factor MEE8 (145 aa).

The span at 33–49 (EKGVEKVGQKRSAESRR) shows a compositional bias: basic and acidic residues. Residues 33-61 (EKGVEKVGQKRSAESRREGKKKRVKTQCV) are disordered. The bHLH domain occupies 66 to 115 (DKSDHDTLLKKKRRERIRRQLETLKEITPNCPQSDINAILDCVIEYTNNL).

In terms of assembly, homodimer.

The protein resides in the nucleus. Functionally, required during early embryo development, for the endosperm formation. This Arabidopsis thaliana (Mouse-ear cress) protein is Transcription factor MEE8 (MEE8).